Here is a 206-residue protein sequence, read N- to C-terminus: MATVVNMDTVVNLDDVSLADKCCWICKEACDIVPNYCKCRGDNKIVHKECLEEWINTDVVKNKSCAICESPYNLKRRYKKITKWRCYKRDCHDSLLVNMSLCLIVGGMGGYLLISTEIVKLIASEEVSNIAKVFLVSASMGPFMVSALTMVRACIDCRTYFIATRERNTIHEVAEMEDVEEVEEVNDDDGDEYVDAVEEIVVESPA.

Residues 1–93 (MATVVNMDTV…WRCYKRDCHD (93 aa)) are Cytoplasmic-facing. An RING-CH-type zinc finger spans residues 15 to 75 (DVSLADKCCW…AICESPYNLK (61 aa)). 8 residues coordinate Zn(2+): Cys-23, Cys-26, Cys-37, Cys-39, His-47, Cys-50, Cys-65, and Cys-68. Residues 94–114 (SLLVNMSLCLIVGGMGGYLLI) form a helical membrane-spanning segment. Topologically, residues 115-129 (STEIVKLIASEEVSN) are lumenal. Residues 130 to 150 (IAKVFLVSASMGPFMVSALTM) form a helical membrane-spanning segment. The Cytoplasmic segment spans residues 151 to 206 (VRACIDCRTYFIATRERNTIHEVAEMEDVEEVEEVNDDDGDEYVDAVEEIVVESPA).

This sequence belongs to the poxviridae LAP protein family.

It is found in the host membrane. The protein localises to the host Golgi apparatus. It localises to the host trans-Golgi network membrane. The protein resides in the host early endosome membrane. The catalysed reaction is S-ubiquitinyl-[E2 ubiquitin-conjugating enzyme]-L-cysteine + [acceptor protein]-L-lysine = [E2 ubiquitin-conjugating enzyme]-L-cysteine + N(6)-ubiquitinyl-[acceptor protein]-L-lysine.. E3 ubiquitin-protein ligase which promotes ubiquitination and subsequent degradation of host MHC-I and CD4 molecules, presumably to prevent lysis of infected cells by cytotoxic T-lymphocytes and NK cell. Binds target molecules through transmembrane interaction. The result of this ubiquitination is the enhancement of the endocytosis of the target chain and the delivery to the lysosome, where it is proteolytically destroyed. The protein is E3 ubiquitin-protein ligase LAP (LAP) of Myxoma virus (strain Lausanne) (MYXV).